A 38-amino-acid chain; its full sequence is Kappa-actitoxin-Bcs3a (38 aa).

The ShKT domain maps to 2–37 (CIDRFPTGTCKHVKKGGSCKNSQKYRINCAKTCGLC). 3 cysteine pairs are disulfide-bonded: cysteine 2-cysteine 37, cysteine 11-cysteine 30, and cysteine 20-cysteine 34. Positions 25 to 26 (KY) are crucial for binding to potassium channels.

It belongs to the sea anemone type 1 potassium channel toxin family. Type 1b subfamily.

Its subcellular location is the secreted. The protein resides in the nematocyst. Its function is as follows. Inhibits voltage-gated potassium channels (IC(50)=405.0 nM for rKCNA1/Kv1.1, IC(50)=0.03 nM for rKCNA2/Kv1.2, IC(50)=1.31 nM for rKCNA6/Kv1.6, IC(50)=74.11 nM for hKCNA3/Kv1.3, and IC(50)=247.69 nM for insect Shaker IR). Binds the Shaker IR channels in a voltage-independent manner. This Bunodosoma caissarum (Sea anemone) protein is Kappa-actitoxin-Bcs3a.